We begin with the raw amino-acid sequence, 68 residues long: Large ribosomal subunit protein bL35 (68 aa).

It belongs to the bacterial ribosomal protein bL35 family.

The chain is Large ribosomal subunit protein bL35 from Pelagibacter ubique (strain HTCC1062).